We begin with the raw amino-acid sequence, 221 residues long: Triosephosphate isomerase (221 aa).

8 to 10 (NLK) provides a ligand contact to substrate. Histidine 92 (electrophile) is an active-site residue. Catalysis depends on glutamate 140, which acts as the Proton acceptor. Residues isoleucine 145, glycine 180, and 201–202 (AS) contribute to the substrate site.

It belongs to the triosephosphate isomerase family. As to quaternary structure, homotetramer; dimer of dimers.

The protein localises to the cytoplasm. It carries out the reaction D-glyceraldehyde 3-phosphate = dihydroxyacetone phosphate. The protein operates within carbohydrate biosynthesis; gluconeogenesis. It participates in carbohydrate degradation; glycolysis; D-glyceraldehyde 3-phosphate from glycerone phosphate: step 1/1. Its function is as follows. Involved in the gluconeogenesis. Catalyzes stereospecifically the conversion of dihydroxyacetone phosphate (DHAP) to D-glyceraldehyde-3-phosphate (G3P). The sequence is that of Triosephosphate isomerase from Methanococcoides burtonii (strain DSM 6242 / NBRC 107633 / OCM 468 / ACE-M).